Reading from the N-terminus, the 130-residue chain is Large ribosomal subunit protein bL21 (130 aa).

Positions 103 to 130 (AGGKTSKAEPRKTRKAEPAAESAPAAAE) are disordered. A compositionally biased stretch (basic and acidic residues) spans 108-120 (SKAEPRKTRKAEP). The span at 121–130 (AAESAPAAAE) shows a compositional bias: low complexity.

It belongs to the bacterial ribosomal protein bL21 family. As to quaternary structure, part of the 50S ribosomal subunit. Contacts protein L20.

This protein binds to 23S rRNA in the presence of protein L20. This is Large ribosomal subunit protein bL21 from Methylorubrum extorquens (strain CM4 / NCIMB 13688) (Methylobacterium extorquens).